Reading from the N-terminus, the 127-residue chain is Fluoride-specific ion channel FluC (127 aa).

The next 4 helical transmembrane spans lie at 7–27 (VYVA…VAWV), 38–58 (GTLA…VYVV), 70–90 (LIMV…LEAW), and 102–122 (LAYI…GIAL). Residues Gly-77 and Thr-80 each contribute to the Na(+) site.

The protein belongs to the fluoride channel Fluc/FEX (TC 1.A.43) family.

The protein resides in the cell inner membrane. The catalysed reaction is fluoride(in) = fluoride(out). With respect to regulation, na(+) is not transported, but it plays an essential structural role and its presence is essential for fluoride channel function. In terms of biological role, fluoride-specific ion channel. Important for reducing fluoride concentration in the cell, thus reducing its toxicity. This chain is Fluoride-specific ion channel FluC, found in Hahella chejuensis (strain KCTC 2396).